A 432-amino-acid chain; its full sequence is MGNNVVVLGTQWGDEGKGKIVDLLTERAKYVVRYQGGHNAGHTLVINGEKTVLHLIPSGILRDNVTSIIGNGVVLSPAALMKEMKELEDRGIPVRERLLLSEACPLILDYHVALDVAREKARGAKAIGTTGRGIGPAYEDKVARRGLRVGDLFDKATFAEKLKEVLEYHNFQLVNFYKVEAVDYQKVLDDVMAIADVLTSMVVDVSDLLDQARKRGDFIMFEGAQGTLLDIDHGTYPYVTSSNTTAGGVATGSGIGPRYVDYVLGIIKAYSTRVGAGPFPTELFDDIGEFLCKKGNEFGATTGRRRRTGWLDAVAVRRAVQINSLSGFCLTKLDVLDGLEEVKICVAYRMPDGREVTTTPMAADDWEGIEPIYETMPGWSESTFGVKERSGLPQAALNYIKRIEEVTGVPIDIISTGPDRTETMILRDPFDA.

Residues 13-19 (GDEGKGK) and 41-43 (GHT) each bind GTP. Residue Asp-14 is the Proton acceptor of the active site. The Mg(2+) site is built by Asp-14 and Gly-41. IMP-binding positions include 14 to 17 (DEGK), 39 to 42 (NAGH), Thr-130, Arg-144, Gln-225, Thr-240, and Arg-304. The Proton donor role is filled by His-42. 300-306 (ATTGRRR) lines the substrate pocket. GTP contacts are provided by residues Arg-306, 332-334 (KLD), and 415-417 (STG).

The protein belongs to the adenylosuccinate synthetase family. Homodimer. Mg(2+) serves as cofactor.

The protein resides in the cytoplasm. It catalyses the reaction IMP + L-aspartate + GTP = N(6)-(1,2-dicarboxyethyl)-AMP + GDP + phosphate + 2 H(+). Its pathway is purine metabolism; AMP biosynthesis via de novo pathway; AMP from IMP: step 1/2. Its function is as follows. Plays an important role in the de novo pathway of purine nucleotide biosynthesis. Catalyzes the first committed step in the biosynthesis of AMP from IMP. This is Adenylosuccinate synthetase from Cronobacter sakazakii (strain ATCC BAA-894) (Enterobacter sakazakii).